The primary structure comprises 447 residues: Tubulin beta-1 chain (447 aa).

Residues Gln-11, Glu-69, Ser-138, Gly-142, Thr-143, Gly-144, Asn-204, and Asn-226 each contribute to the GTP site. Glu-69 contacts Mg(2+).

This sequence belongs to the tubulin family. Dimer of alpha and beta chains. A typical microtubule is a hollow water-filled tube with an outer diameter of 25 nm and an inner diameter of 15 nM. Alpha-beta heterodimers associate head-to-tail to form protofilaments running lengthwise along the microtubule wall with the beta-tubulin subunit facing the microtubule plus end conferring a structural polarity. Microtubules usually have 13 protofilaments but different protofilament numbers can be found in some organisms and specialized cells. Requires Mg(2+) as cofactor.

It is found in the cytoplasm. It localises to the cytoskeleton. Its function is as follows. Tubulin is the major constituent of microtubules, a cylinder consisting of laterally associated linear protofilaments composed of alpha- and beta-tubulin heterodimers. Microtubules grow by the addition of GTP-tubulin dimers to the microtubule end, where a stabilizing cap forms. Below the cap, tubulin dimers are in GDP-bound state, owing to GTPase activity of alpha-tubulin. The chain is Tubulin beta-1 chain (benA) from Emericella nidulans (strain FGSC A4 / ATCC 38163 / CBS 112.46 / NRRL 194 / M139) (Aspergillus nidulans).